A 377-amino-acid polypeptide reads, in one-letter code: MLKRASFVEVDTASLRHNFSAVKSIVPKDAHIMAVVKANAYGAGAIKASEIFLQEGANYLGVAALDEALELRSHFPKTPILILGYSPNTNASMLIDNDLSAMIFSLEQAEVFSQMALKSQKRLKIHLKIDTGMHRLGLEPNFKSIEIIKKIRALKGLEIEGIFTHLSNADAKIKTHAKNQMKAFNAFLEQLLDQKIEFQYRHAYNSAGILSLCNGNENRLLNLYRPGIMLYGFYPSNEMKESCPTILKNVISLKAQIVQIRSVKKGEFIGYGEHFYTNEETLVGVLALGYADGLMRALGNRIQVAINNQLAPLIGKVCMDQCFVKLNDIQAKEGDEVILFGDKSARANDASEIAALLNTIAYETISTLSKRLERVYI.

Lys-37 serves as the catalytic Proton acceptor; specific for D-alanine. N6-(pyridoxal phosphate)lysine is present on Lys-37. Arg-135 provides a ligand contact to substrate. The Proton acceptor; specific for L-alanine role is filled by Tyr-271. Met-319 is a binding site for substrate.

The protein belongs to the alanine racemase family. Pyridoxal 5'-phosphate is required as a cofactor.

It catalyses the reaction L-alanine = D-alanine. Its pathway is amino-acid biosynthesis; D-alanine biosynthesis; D-alanine from L-alanine: step 1/1. In terms of biological role, catalyzes the interconversion of L-alanine and D-alanine. May also act on other amino acids. The sequence is that of Alanine racemase (alr) from Helicobacter pylori (strain G27).